Reading from the N-terminus, the 220-residue chain is Iron-sulfur cluster repair protein YtfE (220 aa).

Belongs to the RIC family. YtfE subfamily. In terms of assembly, homodimer.

It localises to the cytoplasm. Its function is as follows. Di-iron-containing protein involved in the repair of iron-sulfur clusters damaged by oxidative and nitrosative stress conditions. This is Iron-sulfur cluster repair protein YtfE from Salmonella choleraesuis (strain SC-B67).